A 423-amino-acid polypeptide reads, in one-letter code: Phosphoribosylamine--glycine ligase (423 aa).

Residues 107-314 enclose the ATP-grasp domain; that stretch reads KAFMAKYNIP…LSDLVEAAID (208 aa). Residue 133–194 coordinates ATP; the sequence is VNQKGAPIVI…EDFLQGEEAS (62 aa). Mg(2+) contacts are provided by Glu-284 and Asn-286.

It belongs to the GARS family. Requires Mg(2+) as cofactor. Mn(2+) is required as a cofactor.

The enzyme catalyses 5-phospho-beta-D-ribosylamine + glycine + ATP = N(1)-(5-phospho-beta-D-ribosyl)glycinamide + ADP + phosphate + H(+). It functions in the pathway purine metabolism; IMP biosynthesis via de novo pathway; N(1)-(5-phospho-D-ribosyl)glycinamide from 5-phospho-alpha-D-ribose 1-diphosphate: step 2/2. This Neisseria meningitidis serogroup B (strain ATCC BAA-335 / MC58) protein is Phosphoribosylamine--glycine ligase.